Consider the following 688-residue polypeptide: Elongation factor G (688 aa).

Positions 8–282 (ERTRNIGIMA…AVLDYLPAPT (275 aa)) constitute a tr-type G domain. GTP-binding positions include 17–24 (AHIDAGKT), 81–85 (DTPGH), and 135–138 (NKMD).

Belongs to the TRAFAC class translation factor GTPase superfamily. Classic translation factor GTPase family. EF-G/EF-2 subfamily.

It is found in the cytoplasm. Catalyzes the GTP-dependent ribosomal translocation step during translation elongation. During this step, the ribosome changes from the pre-translocational (PRE) to the post-translocational (POST) state as the newly formed A-site-bound peptidyl-tRNA and P-site-bound deacylated tRNA move to the P and E sites, respectively. Catalyzes the coordinated movement of the two tRNA molecules, the mRNA and conformational changes in the ribosome. The protein is Elongation factor G of Clostridioides difficile (strain 630) (Peptoclostridium difficile).